The following is a 280-amino-acid chain: uncharacterized protein (280 aa).

Asparagine 75, asparagine 98, asparagine 107, asparagine 143, asparagine 158, asparagine 170, asparagine 192, asparagine 207, asparagine 224, and asparagine 230 each carry an N-linked (GlcNAc...) asparagine; by host glycan. The chain crosses the membrane as a helical span at residues 235-255 (AFTYGSWGVAMLLFAAVMVLV).

It belongs to the RL11 family.

The protein resides in the host membrane. This is an uncharacterized protein from Human cytomegalovirus (strain Merlin) (HHV-5).